The primary structure comprises 297 residues: Methionyl-tRNA formyltransferase (297 aa).

The segment at 31 to 52 is disordered; sequence QPPRAAGRGQKPRPSPVHRAAE. 108–111 is a binding site for (6S)-5,6,7,8-tetrahydrofolate; that stretch reads SLLP.

The protein belongs to the Fmt family.

It catalyses the reaction L-methionyl-tRNA(fMet) + (6R)-10-formyltetrahydrofolate = N-formyl-L-methionyl-tRNA(fMet) + (6S)-5,6,7,8-tetrahydrofolate + H(+). Its function is as follows. Attaches a formyl group to the free amino group of methionyl-tRNA(fMet). The formyl group appears to play a dual role in the initiator identity of N-formylmethionyl-tRNA by promoting its recognition by IF2 and preventing the misappropriation of this tRNA by the elongation apparatus. The chain is Methionyl-tRNA formyltransferase from Paracoccus denitrificans (strain Pd 1222).